Reading from the N-terminus, the 210-residue chain is Glutathione S-transferase 4 (210 aa).

Positions 1–80 (MDFYYLPLSA…YLVEKYGKQD (80 aa)) constitute a GST N-terminal domain. Residues serine 9, 50-52 (HTI), and 64-66 (ESR) each bind glutathione. Positions 87–208 (CPKKRALINQ…AGALEMKTLI (122 aa)) constitute a GST C-terminal domain.

It belongs to the GST superfamily. Theta family. Homodimer.

The catalysed reaction is RX + glutathione = an S-substituted glutathione + a halide anion + H(+). Functionally, conjugation of reduced glutathione to a wide number of exogenous and endogenous hydrophobic electrophiles. The protein is Glutathione S-transferase 4 (Gst4) of Musca domestica (House fly).